The primary structure comprises 426 residues: Serine hydroxymethyltransferase (426 aa).

Residues Leu-113 and Gly-117–Leu-119 each bind (6S)-5,6,7,8-tetrahydrofolate. Lys-222 carries the post-translational modification N6-(pyridoxal phosphate)lysine. Ser-363–Phe-365 is a (6S)-5,6,7,8-tetrahydrofolate binding site.

This sequence belongs to the SHMT family. In terms of assembly, homodimer. The cofactor is pyridoxal 5'-phosphate.

It is found in the cytoplasm. It carries out the reaction (6R)-5,10-methylene-5,6,7,8-tetrahydrofolate + glycine + H2O = (6S)-5,6,7,8-tetrahydrofolate + L-serine. Its pathway is one-carbon metabolism; tetrahydrofolate interconversion. It functions in the pathway amino-acid biosynthesis; glycine biosynthesis; glycine from L-serine: step 1/1. In terms of biological role, catalyzes the reversible interconversion of serine and glycine with tetrahydrofolate (THF) serving as the one-carbon carrier. This reaction serves as the major source of one-carbon groups required for the biosynthesis of purines, thymidylate, methionine, and other important biomolecules. Also exhibits THF-independent aldolase activity toward beta-hydroxyamino acids, producing glycine and aldehydes, via a retro-aldol mechanism. The polypeptide is Serine hydroxymethyltransferase (Porphyromonas gingivalis (strain ATCC 33277 / DSM 20709 / CIP 103683 / JCM 12257 / NCTC 11834 / 2561)).